Reading from the N-terminus, the 253-residue chain is Ribonuclease PH (253 aa).

Phosphate contacts are provided by residues arginine 86 and 124–126; that span reads GTR.

It belongs to the RNase PH family. As to quaternary structure, homohexameric ring arranged as a trimer of dimers.

It catalyses the reaction tRNA(n+1) + phosphate = tRNA(n) + a ribonucleoside 5'-diphosphate. In terms of biological role, phosphorolytic 3'-5' exoribonuclease that plays an important role in tRNA 3'-end maturation. Removes nucleotide residues following the 3'-CCA terminus of tRNAs; can also add nucleotides to the ends of RNA molecules by using nucleoside diphosphates as substrates, but this may not be physiologically important. Probably plays a role in initiation of 16S rRNA degradation (leading to ribosome degradation) during starvation. The protein is Ribonuclease PH of Brevibacillus brevis (strain 47 / JCM 6285 / NBRC 100599).